The sequence spans 366 residues: Hydroxyproline O-arabinosyltransferase 1 (366 aa).

A helical; Signal-anchor membrane pass occupies residues 6 to 26 (TLFYPLLITLSVALITYNIII).

As to expression, ubiquitous.

Its subcellular location is the golgi apparatus. The protein resides in the cis-Golgi network membrane. It catalyses the reaction trans-4-hydroxy-L-prolyl-[protein] + UDP-beta-L-arabinofuranose = O-(beta-L-arabinofuranosyl)-trans-4-hydroxy-L-prolyl-[protein] + UDP + H(+). Its function is as follows. Glycosyltransferase involved in the O-arabinosylation of several proteins including extensins and small signaling peptides. Catalyzes the transfer of the initial L-arabinose to the hydroxyl group of Hyp residues. Contributes redundantly with HPAT2 and HPAT3 to arabinosylation of EXT3. This chain is Hydroxyproline O-arabinosyltransferase 1, found in Arabidopsis thaliana (Mouse-ear cress).